The primary structure comprises 793 residues: Probable phosphoketolase (793 aa).

It belongs to the XFP family. The cofactor is thiamine diphosphate.

This is Probable phosphoketolase from Streptomyces avermitilis (strain ATCC 31267 / DSM 46492 / JCM 5070 / NBRC 14893 / NCIMB 12804 / NRRL 8165 / MA-4680).